We begin with the raw amino-acid sequence, 80 residues long: Conotoxin VnMSGL-0121 (80 aa).

The signal sequence occupies residues 1–20 (MSGLGIMVLTLLLLVSMATS). Residues 21–44 (HQDGGGKQATQRDAINVRRRRSIT) constitute a propeptide that is removed on maturation. Intrachain disulfides connect Cys-52–Cys-65, Cys-56–Cys-74, and Cys-64–Cys-78. Phe-79 bears the Phenylalanine amide mark.

This sequence belongs to the conotoxin O3 superfamily. As to expression, expressed by the venom duct.

The protein localises to the secreted. The polypeptide is Conotoxin VnMSGL-0121 (Conus ventricosus (Mediterranean cone)).